The chain runs to 70 residues: Small ribosomal subunit protein bS21B (70 aa).

The protein belongs to the bacterial ribosomal protein bS21 family.

This is Small ribosomal subunit protein bS21B from Burkholderia thailandensis (strain ATCC 700388 / DSM 13276 / CCUG 48851 / CIP 106301 / E264).